Consider the following 183-residue polypeptide: Large ribosomal subunit protein bL17 (183 aa).

Residues 130–150 are compositionally biased toward basic and acidic residues; it reads GTKFAKDEKAKAEATEAKAEE. A disordered region spans residues 130–183; the sequence is GTKFAKDEKAKAEATEAKAEETTETTESTEAESTEAPAEEAKAEDTAAEKKDES. The span at 151–162 shows a compositional bias: acidic residues; sequence TTETTESTEAES. Over residues 168–183 the composition is skewed to basic and acidic residues; it reads EEAKAEDTAAEKKDES.

Belongs to the bacterial ribosomal protein bL17 family. As to quaternary structure, part of the 50S ribosomal subunit. Contacts protein L32.

The protein is Large ribosomal subunit protein bL17 of Saccharopolyspora erythraea (strain ATCC 11635 / DSM 40517 / JCM 4748 / NBRC 13426 / NCIMB 8594 / NRRL 2338).